A 536-amino-acid chain; its full sequence is Xylulose kinase (536 aa).

Substrate contacts are provided by H99, R170, D280, and N281. Residues W355, 441–442 (GA), and N445 contribute to the ATP site.

The protein belongs to the FGGY kinase family. Monomer.

It carries out the reaction D-xylulose + ATP = D-xylulose 5-phosphate + ADP + H(+). In terms of biological role, phosphorylates D-xylulose to produce D-xylulose 5-phosphate, a molecule that may play an important role in the regulation of glucose metabolism and lipogenesis. This Rattus norvegicus (Rat) protein is Xylulose kinase (Xylb).